The chain runs to 614 residues: Interleukin-18 receptor accessory protein (614 aa).

Positions 1-19 are cleaved as a signal peptide; the sequence is MLCLGWVFLWFVAGEKTTG. The Extracellular portion of the chain corresponds to 20–356; the sequence is FNHSACATKK…RTIRLRKKEE (337 aa). The N-linked (GlcNAc...) asparagine glycan is linked to Asn-21. Cys-46 and Cys-126 are disulfide-bonded. A disordered region spans residues 59-78; sequence ASQLSPTQSPAHKPCSGSQK. 2 Ig-like C2-type domains span residues 148-234 and 250-352; these read PQRN…WTVR and PEIL…IRLR. Asn-151 carries N-linked (GlcNAc...) asparagine glycosylation. 3 cysteine pairs are disulfide-bonded: Cys-154-Cys-179, Cys-174-Cys-220, and Cys-179-Cys-220. A glycan (N-linked (GlcNAc...) asparagine) is linked at Asn-227. Cys-272 and Cys-336 form a disulfide bridge. The N-linked (GlcNAc...) asparagine glycan is linked to Asn-344. Residues 357–377 form a helical membrane-spanning segment; that stretch reads VVFVYILLGTALMLVGVLVAA. Over 378–614 the chain is Cytoplasmic; that stretch reads AFLYWYWIEV…LLLYSDQKRC (237 aa). One can recognise a TIR domain in the interval 405-558; it reads KEFDAFVSYS…RFWTQIRYHM (154 aa). Glu-492 is a catalytic residue.

The protein belongs to the interleukin-1 receptor family. As to quaternary structure, forms a ternary complex with IL18 and IL18R1. Within this complex, IL18R1 is involved in ligand-binding and IL18RAP in signaling leading to NF-kappa-B and JNK activation.

It is found in the cell membrane. It carries out the reaction NAD(+) + H2O = ADP-D-ribose + nicotinamide + H(+). Within the IL18 receptor complex, does not mediate IL18-binding, but involved in IL18-dependent signal transduction, leading to NF-kappa-B and JNK activation. May play a role in IL18-mediated IFNG synthesis from T-helper 1 (Th1) cells. The polypeptide is Interleukin-18 receptor accessory protein (Mus musculus (Mouse)).